A 171-amino-acid chain; its full sequence is Adenine phosphoribosyltransferase (171 aa).

Belongs to the purine/pyrimidine phosphoribosyltransferase family. As to quaternary structure, homodimer.

The protein resides in the cytoplasm. It catalyses the reaction AMP + diphosphate = 5-phospho-alpha-D-ribose 1-diphosphate + adenine. Its pathway is purine metabolism; AMP biosynthesis via salvage pathway; AMP from adenine: step 1/1. Its function is as follows. Catalyzes a salvage reaction resulting in the formation of AMP, that is energically less costly than de novo synthesis. The chain is Adenine phosphoribosyltransferase from Prochlorococcus marinus (strain MIT 9515).